The chain runs to 86 residues: Small ribosomal subunit protein bS16 (86 aa).

The protein belongs to the bacterial ribosomal protein bS16 family.

The sequence is that of Small ribosomal subunit protein bS16 from Acidithiobacillus ferrooxidans (strain ATCC 23270 / DSM 14882 / CIP 104768 / NCIMB 8455) (Ferrobacillus ferrooxidans (strain ATCC 23270)).